A 264-amino-acid polypeptide reads, in one-letter code: S-adenosylmethionine decarboxylase proenzyme (264 aa).

The active-site Schiff-base intermediate with substrate; via pyruvic acid is the Ser112. Ser112 bears the Pyruvic acid (Ser); by autocatalysis mark. His117 functions as the Proton acceptor; for processing activity in the catalytic mechanism. The Proton donor; for catalytic activity role is filled by Cys140.

The protein belongs to the prokaryotic AdoMetDC family. Type 2 subfamily. Heterooctamer of four alpha and four beta chains arranged as a tetramer of alpha/beta heterodimers. It depends on pyruvate as a cofactor. Is synthesized initially as an inactive proenzyme. Formation of the active enzyme involves a self-maturation process in which the active site pyruvoyl group is generated from an internal serine residue via an autocatalytic post-translational modification. Two non-identical subunits are generated from the proenzyme in this reaction, and the pyruvate is formed at the N-terminus of the alpha chain, which is derived from the carboxyl end of the proenzyme. The post-translation cleavage follows an unusual pathway, termed non-hydrolytic serinolysis, in which the side chain hydroxyl group of the serine supplies its oxygen atom to form the C-terminus of the beta chain, while the remainder of the serine residue undergoes an oxidative deamination to produce ammonia and the pyruvoyl group blocking the N-terminus of the alpha chain.

The enzyme catalyses S-adenosyl-L-methionine + H(+) = S-adenosyl 3-(methylsulfanyl)propylamine + CO2. It participates in amine and polyamine biosynthesis; S-adenosylmethioninamine biosynthesis; S-adenosylmethioninamine from S-adenosyl-L-methionine: step 1/1. Its function is as follows. Catalyzes the decarboxylation of S-adenosylmethionine to S-adenosylmethioninamine (dcAdoMet), the propylamine donor required for the synthesis of the polyamines spermine and spermidine from the diamine putrescine. The protein is S-adenosylmethionine decarboxylase proenzyme of Sodalis glossinidius (strain morsitans).